Here is a 127-residue protein sequence, read N- to C-terminus: DNA-directed RNA polymerases I, II, and III subunit RPABC2 (127 aa).

Over residues 1–34 (MSDNEDNFDGDDFDDVEEDEGLDDLENAEEEGQE) the composition is skewed to acidic residues. The tract at residues 1–53 (MSDNEDNFDGDDFDDVEEDEGLDDLENAEEEGQENVEILPSGERPQANQKRIT) is disordered. Ser-2 carries the post-translational modification N-acetylserine. A Phosphoserine; by CK2 modification is found at Ser-2.

The protein belongs to the archaeal Rpo6/eukaryotic RPB6 RNA polymerase subunit family. In terms of assembly, component of the RNA polymerase I (Pol I), RNA polymerase II (Pol II) and RNA polymerase III (Pol III) complexes consisting of at least 13, 12 and 17 subunits, respectively. Pol I complex consists of a ten-subunit catalytic core composed of POLR1A/RPA1, POLR1B/RPA2, POLR1C/RPAC1, POLR1D/RPAC2, POLR1H/RPA12, POLR2E/RPABC1, POLR2F/RPABC2, POLR2H/RPABC3, POLR2K/RPABC4 and POLR2L/RPABC5; a mobile stalk subunit POLR1F/RPA43 protruding from the core and additional subunits homologous to general transcription factors POLR1E/RPA49 and POLR1G/RPA34. Part of Pol I pre-initiation complex (PIC), in which Pol I core assembles with RRN3 and promoter-bound UTBF and SL1/TIF-IB complex. Pol II complex contains a ten-subunit catalytic core composed of POLR2A/RPB1, POLR2B/RPB2, POLR2C/RPB3, POLR2I/RPB9, POLR2J/RPB11, POLR2E/RPABC1, POLR2F/RPABC2, POLR2H/RPABC3, POLR2K/RPABC4 and POLR2L/RPABC5 and a mobile stalk composed of two subunits POLR2D/RPB4 and POLR2G/RPB7. Part of Pol II(G) complex, in which Pol II core associates with an additional subunit POLR2M; unlike conventional Pol II, Pol II(G) functions as a transcriptional repressor. Part of TBP-based Pol II pre-initiation complex (PIC), in which Pol II core assembles with general transcription factors and other specific initiation factors including GTF2E1, GTF2E2, GTF2F1, GTF2F2, TCEA1, ERCC2, ERCC3, GTF2H2, GTF2H3, GTF2H4, GTF2H5, GTF2A1, GTF2A2, GTF2B and TBP; this large multi-subunit PIC complex mediates DNA unwinding and targets Pol II core to the transcription start site where the first phosphodiester bond forms. Pol III complex consists of a ten-subunit catalytic core composed of POLR3A/RPC1, POLR3B/RPC2, POLR1C/RPAC1, POLR1D/RPAC2, POLR3K/RPC10, POLR2E/RPABC1, POLR2F/RPABC2, POLR2H/RPABC3, POLR2K/RPABC4 and POLR2L/RPABC5; a mobile stalk composed of two subunits POLR3H/RPC8 and CRCP/RPC9, protruding from the core and functioning primarily in transcription initiation; and additional subunits homologous to general transcription factors of the RNA polymerase II machinery, POLR3C/RPC3-POLR3F/RPC6-POLR3G/RPC7 heterotrimer required for transcription initiation and POLR3D/RPC4-POLR3E/RPC5 heterodimer involved in both transcription initiation and termination.

Its subcellular location is the nucleus. The protein resides in the nucleolus. Its function is as follows. DNA-dependent RNA polymerase catalyzes the transcription of DNA into RNA using the four ribonucleoside triphosphates as substrates. Common component of RNA polymerases I, II, and III which synthesize ribosomal RNA precursors, mRNA precursors and many functional non-coding RNAs, and small RNAs, such as 5S rRNA and tRNAs, respectively. Pol II is the central component of the basal RNA polymerase II transcription machinery. Pols are composed of mobile elements that move relative to each other. In Pol II, POLR2F/RPABC2 is part of the clamp element and together with parts of POLR2A/RPB1 and POLR2B/RPB2 forms a pocket to which the POLR2D/RPB4-POLR2G/RPB7 subcomplex binds. The polypeptide is DNA-directed RNA polymerases I, II, and III subunit RPABC2 (Homo sapiens (Human)).